A 276-amino-acid chain; its full sequence is Putative pyruvate, phosphate dikinase regulatory protein (276 aa).

ADP is bound at residue 151 to 158; it reads GISRTSKT.

Belongs to the pyruvate, phosphate/water dikinase regulatory protein family. PDRP subfamily.

It carries out the reaction N(tele)-phospho-L-histidyl/L-threonyl-[pyruvate, phosphate dikinase] + ADP = N(tele)-phospho-L-histidyl/O-phospho-L-threonyl-[pyruvate, phosphate dikinase] + AMP + H(+). The enzyme catalyses N(tele)-phospho-L-histidyl/O-phospho-L-threonyl-[pyruvate, phosphate dikinase] + phosphate + H(+) = N(tele)-phospho-L-histidyl/L-threonyl-[pyruvate, phosphate dikinase] + diphosphate. In terms of biological role, bifunctional serine/threonine kinase and phosphorylase involved in the regulation of the pyruvate, phosphate dikinase (PPDK) by catalyzing its phosphorylation/dephosphorylation. The protein is Putative pyruvate, phosphate dikinase regulatory protein of Streptococcus agalactiae serotype Ia (strain ATCC 27591 / A909 / CDC SS700).